Consider the following 80-residue polypeptide: ATP synthase F(1) complex subunit delta, mitochondrial (80 aa).

The N-terminal 22 residues, 1 to 22 (MLPATLLRXSGLGRVVRQARAY), are a transit peptide targeting the mitochondrion.

This sequence belongs to the ATPase epsilon chain family. As to quaternary structure, component of the ATP synthase complex composed at least of ATP5F1A/subunit alpha, ATP5F1B/subunit beta, ATP5MC1/subunit c (homooctomer), MT-ATP6/subunit a, MT-ATP8/subunit 8, ATP5ME/subunit e, ATP5MF/subunit f, ATP5MG/subunit g, ATP5MK/subunit k, ATP5MJ/subunit j, ATP5F1C/subunit gamma, ATP5F1D/subunit delta, ATP5F1E/subunit epsilon, ATP5PF/subunit F6, ATP5PB/subunit b, ATP5PD/subunit d, ATP5PO/subunit OSCP. ATP synthase complex consists of a soluble F(1) head domain (subunits alpha(3) and beta(3)) - the catalytic core - and a membrane F(0) domain - the membrane proton channel (subunits c, a, 8, e, f, g, k and j). These two domains are linked by a central stalk (subunits gamma, delta, and epsilon) rotating inside the F1 region and a stationary peripheral stalk (subunits F6, b, d, and OSCP). Component of a complex composed at least by ATPIF1, ATP5F1A, ATP5F1B, ATP5F1C AND ATP5F1E.

Its subcellular location is the mitochondrion. The protein resides in the mitochondrion inner membrane. Its function is as follows. Subunit delta, of the mitochondrial membrane ATP synthase complex (F(1)F(0) ATP synthase or Complex V) that produces ATP from ADP in the presence of a proton gradient across the membrane which is generated by electron transport complexes of the respiratory chain. ATP synthase complex consist of a soluble F(1) head domain - the catalytic core - and a membrane F(1) domain - the membrane proton channel. These two domains are linked by a central stalk rotating inside the F(1) region and a stationary peripheral stalk. During catalysis, ATP synthesis in the catalytic domain of F(1) is coupled via a rotary mechanism of the central stalk subunits to proton translocation. In vivo, can only synthesize ATP although its ATP hydrolase activity can be activated artificially in vitro. With the central stalk subunit gamma, is essential for the biogenesis of F(1) catalytic part of the ATP synthase complex namely in the formation of F1 assembly intermediate. In Sus scrofa (Pig), this protein is ATP synthase F(1) complex subunit delta, mitochondrial.